A 54-amino-acid chain; its full sequence is Ribulose bisphosphate carboxylase large chain (54 aa).

Positions 1–2 (MS) are excised as a propeptide. At Pro3 the chain carries N-acetylproline. Lys14 is subject to N6,N6,N6-trimethyllysine.

The protein belongs to the RuBisCO large chain family. Type I subfamily. As to quaternary structure, heterohexadecamer of 8 large chains and 8 small chains.

Its subcellular location is the plastid. It localises to the chloroplast. The enzyme catalyses 2 (2R)-3-phosphoglycerate + 2 H(+) = D-ribulose 1,5-bisphosphate + CO2 + H2O. It catalyses the reaction D-ribulose 1,5-bisphosphate + O2 = 2-phosphoglycolate + (2R)-3-phosphoglycerate + 2 H(+). In terms of biological role, ruBisCO catalyzes two reactions: the carboxylation of D-ribulose 1,5-bisphosphate, the primary event in carbon dioxide fixation, as well as the oxidative fragmentation of the pentose substrate in the photorespiration process. Both reactions occur simultaneously and in competition at the same active site. In Magnolia liliiflora (Mulan magnolia), this protein is Ribulose bisphosphate carboxylase large chain (rbcL).